The chain runs to 206 residues: Small ribosomal subunit protein uS3 (206 aa).

Positions 39 to 107 (IRSYINESFK…SVEVNVVGIK (69 aa)) constitute a KH type-2 domain.

It belongs to the universal ribosomal protein uS3 family. In terms of assembly, part of the 30S ribosomal subunit. Forms a tight complex with proteins S10 and S14.

Binds the lower part of the 30S subunit head. Binds mRNA in the 70S ribosome, positioning it for translation. The chain is Small ribosomal subunit protein uS3 from Wolbachia sp. subsp. Brugia malayi (strain TRS).